A 674-amino-acid polypeptide reads, in one-letter code: Sodium/myo-inositol cotransporter 2 (674 aa).

Residues 1-27 (MESSTSSPQPPLSDPLDPFPQRSLEPG) lie on the Extracellular side of the membrane. The chain crosses the membrane as a helical span at residues 28 to 48 (DIAVLVLYFLFVLAVGLWSTV). Residues 49-56 (KTKRDTVK) are Cytoplasmic-facing. The helical transmembrane segment at 57–77 (GYFLAGGDMVWWPVGASLFAS) threads the bilayer. At 78 to 102 (NVGSGHFVGLAGSGAATGISVAAYE) the chain is on the extracellular side. A helical membrane pass occupies residues 103-123 (FNGMFSVLMLAWIFLPIYIAG). Topologically, residues 124–140 (QVTTMPEYLRRRFGGSR) are cytoplasmic. A helical membrane pass occupies residues 141–161 (IAITLAVLYLFIYIFTKISVD). The Extracellular portion of the chain corresponds to 162 to 180 (MYAGAIFIQQSLHLDLYLS). The chain crosses the membrane as a helical span at residues 181-201 (VVGLLAVTALYTVAGGLAAVI). Topologically, residues 202–208 (YTDALQT) are cytoplasmic. A helical membrane pass occupies residues 209–229 (LIMLVGALTLMGYSFAAVGGM). At 230 to 272 (EGLQEKYFLALPSNRSENSSCGLPREDAFHLFRDPLTSDLPWP) the chain is on the extracellular side. Residues 273–293 (GILFGMSIPSLWYWCTDQVIV) form a helical membrane-spanning segment. Over 294–308 (QRSLAAKNLSHAKGG) the chain is Cytoplasmic. Residues 309–329 (SLMAAYLKVLPLFIMVFPGMV) traverse the membrane as a helical segment. The Extracellular segment spans residues 330 to 375 (SRILFPDQVACADPETCQRVCNNPSGCSDIAYPKLVLELLPTGLRG). The helical transmembrane segment at 376–396 (LMMAVMVAALMSSLTSIFNSA) threads the bilayer. Residues 397 to 418 (STIFTMDLWNHVRPRASEKELM) are Cytoplasmic-facing. Residues 419–439 (IVGRVFVLLLVLVSVLWIPVV) form a helical membrane-spanning segment. At 440 to 446 (QASQGGQ) the chain is on the extracellular side. Residues 447–467 (LFVYIQAISSYLQPPVAMVFV) form a helical membrane-spanning segment. Residues 468-479 (LGCFWKRANEKG) are Cytoplasmic-facing. A helical membrane pass occupies residues 480-500 (AFWGLVLGLLLGFIRLILDFI). The Extracellular portion of the chain corresponds to 501-521 (YVEPACHQPDERPSVVKNVHY). Residues 522–542 (LYFSMILSSVTVLTVTVMSLL) traverse the membrane as a helical segment. Residues 543-653 (TEPPSKEMIS…SIEENPVVKT (111 aa)) lie on the Cytoplasmic side of the membrane. A helical transmembrane segment spans residues 654–674 (LLDVNCLLCICCAFFLWGYFA).

Belongs to the sodium:solute symporter (SSF) (TC 2.A.21) family. In terms of tissue distribution, expressed in brain, lung and kidney. In the kidney, strongly expressed in the cortex, at the luminal side of proximal convoluted tubules and in BBMVs. Weaker expression observed in the medulla (at protein level).

The protein localises to the membrane. It is found in the apical cell membrane. It catalyses the reaction myo-inositol(out) + 2 Na(+)(out) = myo-inositol(in) + 2 Na(+)(in). The catalysed reaction is 1D-chiro-inositol(out) + 2 Na(+)(out) = 1D-chiro-inositol(in) + 2 Na(+)(in). It carries out the reaction D-glucose(out) + 2 Na(+)(out) = D-glucose(in) + 2 Na(+)(in). The enzyme catalyses D-xylose(out) + 2 Na(+)(out) = D-xylose(in) + 2 Na(+)(in). With respect to regulation, MI transport activity stimulated five-fold under 24 hour hypertonic shock conditions. MI inward currents were gradually inhibited as increasing amounts of phlorizin were added to the superfusion medium. When sodium is replaced by potassium, MI uptake is dramatically reduced and in the presence of L-fucose or D-chiro-inositol (DCI), the specific accumulation of tracer amounts of MI is also reduced. Its function is as follows. Involved in the sodium-dependent cotransport of myo-inositol (MI) with a Na(+):MI stoichiometry of 2:1. Exclusively responsible for apical MI transport and absorption in intestine. Can also transport D-chiro-inositol (DCI) but not L-fucose. Exhibits stereospecific cotransport of both D-glucose and D-xylose. May induce apoptosis through the TNF-alpha, PDCD1 pathway. May play a role in the regulation of MI concentration in serum, involving reabsorption in at least the proximal tubule of the kidney. In Oryctolagus cuniculus (Rabbit), this protein is Sodium/myo-inositol cotransporter 2.